Consider the following 69-residue polypeptide: uncharacterized protein (69 aa).

In terms of domain architecture, HTH cro/C1-type spans I5–I60. Positions Q16 to K35 form a DNA-binding region, H-T-H motif.

This is an uncharacterized protein from Methanothermobacter thermautotrophicus (strain ATCC 29096 / DSM 1053 / JCM 10044 / NBRC 100330 / Delta H) (Methanobacterium thermoautotrophicum).